A 308-amino-acid chain; its full sequence is Carnitine transport binding protein OpuCC (308 aa).

The signal sequence occupies residues 1–22; it reads MKKKFIALFSVLLLTSSLFLSS. Residue Cys23 is the site of N-palmitoyl cysteine attachment. Cys23 carries S-diacylglycerol cysteine lipidation.

This sequence belongs to the OsmX family. As to quaternary structure, the complex is composed of two ATP-binding proteins (OpuCA), two transmembrane proteins (OpuCB and OpuCD) and a solute-binding protein (OpuCC).

The protein resides in the cell membrane. Its function is as follows. Part of the ABC transporter complex OpuCABCD involved in carnitine uptake. Involved, with BetL and GbuABC, in osmoprotection and cryoprotection of Listeria. Can also mediate weak glycine betaine transport. The protein is Carnitine transport binding protein OpuCC (opuCC) of Listeria monocytogenes serotype 1/2a (strain 10403S).